The chain runs to 472 residues: Chromosomal replication initiator protein DnaA (472 aa).

A domain I, interacts with DnaA modulators region spans residues 1–80 (MDTKQIWFTT…YQVNVRVIIS (80 aa)). A domain II region spans residues 80–130 (SSATPAPSEPVAVTPSEPSPTTEVAEPSFASFNQAAPMLNQLPLGDPNRSS). A domain III, AAA+ region region spans residues 131–347 (VLNPRYTFSS…GCLNRVIAYA (217 aa)). ATP contacts are provided by G175, G177, K178, and T179. Positions 348 to 472 (NLNRTPVTVE…RQRLYGENAR (125 aa)) are domain IV, binds dsDNA.

This sequence belongs to the DnaA family. In terms of assembly, oligomerizes as a right-handed, spiral filament on DNA at oriC.

The protein resides in the cytoplasm. Functionally, plays an essential role in the initiation and regulation of chromosomal replication. ATP-DnaA binds to the origin of replication (oriC) to initiate formation of the DNA replication initiation complex once per cell cycle. Binds the DnaA box (a 9 base pair repeat at the origin) and separates the double-stranded (ds)DNA. Forms a right-handed helical filament on oriC DNA; dsDNA binds to the exterior of the filament while single-stranded (ss)DNA is stabiized in the filament's interior. The ATP-DnaA-oriC complex binds and stabilizes one strand of the AT-rich DNA unwinding element (DUE), permitting loading of DNA polymerase. After initiation quickly degrades to an ADP-DnaA complex that is not apt for DNA replication. Binds acidic phospholipids. The chain is Chromosomal replication initiator protein DnaA from Herpetosiphon aurantiacus (strain ATCC 23779 / DSM 785 / 114-95).